A 488-amino-acid chain; its full sequence is Glutamyl-tRNA(Gln) amidotransferase subunit A (488 aa).

Residues lysine 77 and serine 152 each act as charge relay system in the active site. Serine 176 serves as the catalytic Acyl-ester intermediate.

It belongs to the amidase family. GatA subfamily. Heterotrimer of A, B and C subunits.

It carries out the reaction L-glutamyl-tRNA(Gln) + L-glutamine + ATP + H2O = L-glutaminyl-tRNA(Gln) + L-glutamate + ADP + phosphate + H(+). Functionally, allows the formation of correctly charged Gln-tRNA(Gln) through the transamidation of misacylated Glu-tRNA(Gln) in organisms which lack glutaminyl-tRNA synthetase. The reaction takes place in the presence of glutamine and ATP through an activated gamma-phospho-Glu-tRNA(Gln). The sequence is that of Glutamyl-tRNA(Gln) amidotransferase subunit A from Streptococcus pyogenes serotype M18 (strain MGAS8232).